The following is a 132-amino-acid chain: Small ribosomal subunit protein uS8c (132 aa).

This sequence belongs to the universal ribosomal protein uS8 family. In terms of assembly, part of the 30S ribosomal subunit.

It is found in the plastid. Its subcellular location is the chloroplast. Its function is as follows. One of the primary rRNA binding proteins, it binds directly to 16S rRNA central domain where it helps coordinate assembly of the platform of the 30S subunit. The protein is Small ribosomal subunit protein uS8c (rps8) of Platanus occidentalis (Sycamore).